A 141-amino-acid chain; its full sequence is Large ribosomal subunit protein uL11 (141 aa).

It belongs to the universal ribosomal protein uL11 family. As to quaternary structure, part of the ribosomal stalk of the 50S ribosomal subunit. Interacts with L10 and the large rRNA to form the base of the stalk. L10 forms an elongated spine to which L12 dimers bind in a sequential fashion forming a multimeric L10(L12)X complex. Post-translationally, one or more lysine residues are methylated.

Its function is as follows. Forms part of the ribosomal stalk which helps the ribosome interact with GTP-bound translation factors. The sequence is that of Large ribosomal subunit protein uL11 from Synechococcus sp. (strain RCC307).